Reading from the N-terminus, the 178-residue chain is Cysteine-rich venom protein VAR3 (178 aa).

A signal peptide spans 1–22; it reads MILLKLYLTLAAILCQSRGTTS. Residues 41–169 enclose the SCP domain; it reads NKHNDLRRTV…PLKYFLVCQY (129 aa). Cystine bridges form between cysteine 77–cysteine 156, cysteine 95–cysteine 170, and cysteine 151–cysteine 167.

Belongs to the CRISP family. In terms of processing, contains 8 disulfide bonds. In terms of tissue distribution, expressed by the venom gland.

It is found in the secreted. In terms of biological role, blocks ryanodine receptors, and potassium channels. This Varanus acanthurus (Ridge-tailed monitor) protein is Cysteine-rich venom protein VAR3.